We begin with the raw amino-acid sequence, 417 residues long: Probable pectate lyase 20 (417 aa).

A signal peptide spans 1 to 25; sequence MAVTQILVVFASALLLSMFFTGVDS. N29 and N53 each carry an N-linked (GlcNAc...) asparagine glycan. 3 residues coordinate Ca(2+): D215, D239, and D243. Residue R295 is part of the active site.

It belongs to the polysaccharide lyase 1 family. It depends on Ca(2+) as a cofactor.

It carries out the reaction Eliminative cleavage of (1-&gt;4)-alpha-D-galacturonan to give oligosaccharides with 4-deoxy-alpha-D-galact-4-enuronosyl groups at their non-reducing ends.. The protein operates within glycan metabolism; pectin degradation; 2-dehydro-3-deoxy-D-gluconate from pectin: step 2/5. The polypeptide is Probable pectate lyase 20 (Arabidopsis thaliana (Mouse-ear cress)).